We begin with the raw amino-acid sequence, 427 residues long: WD repeat and SOCS box-containing protein 1 (427 aa).

WD repeat units lie at residues 129-170 (SRSI…LLLN), 173-213 (DHTD…NMVK), 217-256 (GHPNRVYSSAFSPDSSVLCSVGASKAVLLWNMDKYTLIRK), 259-298 (GHHNDVVSCEFSPDGALLATASYDTRVIVWDHQRGSILLE), and 314-353 (ANDRWVRSVSFCADGRHIASVSDDRLVRFWSIEERAPQAV). The SOCS box domain occupies 379 to 427 (SVHFWECPRSIASLQHLCRMALRRVKTTQQVEALPVPMPLRDFLTYRVV).

Component of a probable ECS E3 ubiquitin-protein ligase complex that contains the Elongin BC complex.

Its pathway is protein modification; protein ubiquitination. Its function is as follows. Probable substrate-recognition component of a SCF-like ECS (Elongin-Cullin-SOCS-box protein) E3 ubiquitin-protein ligase complex which mediates the ubiquitination and subsequent proteasomal degradation of target proteins. The chain is WD repeat and SOCS box-containing protein 1 (wsb1) from Takifugu rubripes (Japanese pufferfish).